The sequence spans 145 residues: D-aminoacyl-tRNA deacylase (145 aa).

The Gly-cisPro motif, important for rejection of L-amino acids signature appears at 137–138 (GP).

Belongs to the DTD family. In terms of assembly, homodimer.

Its subcellular location is the cytoplasm. The enzyme catalyses glycyl-tRNA(Ala) + H2O = tRNA(Ala) + glycine + H(+). It carries out the reaction a D-aminoacyl-tRNA + H2O = a tRNA + a D-alpha-amino acid + H(+). In terms of biological role, an aminoacyl-tRNA editing enzyme that deacylates mischarged D-aminoacyl-tRNAs. Also deacylates mischarged glycyl-tRNA(Ala), protecting cells against glycine mischarging by AlaRS. Acts via tRNA-based rather than protein-based catalysis; rejects L-amino acids rather than detecting D-amino acids in the active site. By recycling D-aminoacyl-tRNA to D-amino acids and free tRNA molecules, this enzyme counteracts the toxicity associated with the formation of D-aminoacyl-tRNA entities in vivo and helps enforce protein L-homochirality. The polypeptide is D-aminoacyl-tRNA deacylase (Methylacidiphilum infernorum (isolate V4) (Methylokorus infernorum (strain V4))).